A 358-amino-acid polypeptide reads, in one-letter code: MSRAAGLPRLSWFAGLTWFAGGSTGAGCAAHPALAGLTAGARCPAYAAISASTARPAATALPAVAASTARPAATAGTTPATGASGSARPTDAAGMADLARPGVVATHAVRTLGTTGSRAIGLCPCQPLDCPRSPQATPNLGSMGRSLDGPQWRRARVRLCGRWWRRSNTTRGASPRPPSTCRGDNVSMIELEVHQADVTKLELDAITNAANTRLRHAGGVAAAIARAGGPELQRESTEKAPIGLGEAVETTAGDMPARYVIHAATMELGGPTSGEIITAATAATLRKADELGCRSLALVAFGTGVGGFPLDDAARLMVGAVRRHRPGSLQRVVFAVHGDAAERAFSAAIQAGEDTARR.

The span at 70-88 (RPAATAGTTPATGASGSAR) shows a compositional bias: low complexity. The tract at residues 70 to 93 (RPAATAGTTPATGASGSARPTDAA) is disordered. Residues 178–353 (PSTCRGDNVS…AFSAAIQAGE (176 aa)) form the Macro domain.

This is an uncharacterized protein from Mycobacterium bovis (strain ATCC BAA-935 / AF2122/97).